Consider the following 144-residue polypeptide: Aklanonic acid methyl ester cyclase AcmA (144 aa).

Substrate-binding residues include Asn-51 and Gln-105.

The protein belongs to the polyketide cyclase DnrD family. Homotetramer.

The enzyme catalyses methyl aklanonate = aklaviketone. The protein operates within antibiotic biosynthesis; daunorubicin biosynthesis. It functions in the pathway antibiotic biosynthesis; carminomycin biosynthesis. Its pathway is antibiotic biosynthesis; rhodomycin biosynthesis. It participates in antibiotic biosynthesis; aclacinomycin biosynthesis. Functionally, involved in the biosynthesis of aklavinone which is an important precursor common to the formation of the clinically significant anthracyclines such as carminomycin, daunorubicin (daunomycin), rhodomycin, aclacinomycin T (aklavin) and aclacinomycin A (aclarubicin). These compounds are aromatic polyketide antibiotics that exhibit high cytotoxicity and are widely applied in the chemotherapy of a variety of cancers. Catalyzes the cyclization of aklanonic acid methyl ester to yield aklaviketone. It is also able to use nogalonic acid methyl ester as substrate, but produces exclusively auraviketone with C9-R stereochemistry. In Streptomyces galilaeus, this protein is Aklanonic acid methyl ester cyclase AcmA (acma).